A 106-amino-acid polypeptide reads, in one-letter code: MNSILGLIDTVTNTIGKAQQIELDKAALGQQRELALQRMNLDRQALNNQVEQFNKILEQRVQGPLQSVRLARAAGFRVDPYSYTNQNFYDDQLNAIRLSYRNLFKN.

Belongs to the vesivirus VP2 protein family. As to quaternary structure, homooligomer. The portal-like structure consists in 12 copies of VP2. Interacts with capsid protein VP1.

Its subcellular location is the virion. It is found in the host cytoplasm. Functionally, minor structural protein that forms a portal-like structure at a unique three-fold axis of symmetry, following binding to the host receptor. The virion attaches to feline junctional adhesion molecule A (F11R). Once attached, the virion is endocytosed. Acidification of the endosome induces conformational change of capsid protein thereby injecting virus genomic RNA into host cytoplasm. The channel formed by VP2 may allow the delivery of the viral genome through the host endosomal membrane. The chain is Minor capsid protein VP2 from Feline calicivirus (strain Cat/United States/Urbana/1960) (FCV).